Consider the following 390-residue polypeptide: 5-hydroxytryptamine receptor 1B (390 aa).

Residues 1–46 lie on the Extracellular side of the membrane; the sequence is MEEPGAQCAPPLAAGSQIAVPQANLSAAHSHNCSAEGYIYQDSIAL. 2 N-linked (GlcNAc...) asparagine glycosylation sites follow: Asn-24 and Asn-32. A helical membrane pass occupies residues 47–72; it reads PWKVLLVLLLALFTLATTLSNAFVVA. The Cytoplasmic segment spans residues 73–86; that stretch reads TVYRTRKLHTPANY. A helical transmembrane segment spans residues 87–111; sequence LIASLAVTDLLVSILVMPISTMYTV. Topologically, residues 112-119 are extracellular; the sequence is TGRWTLGQ. A helical membrane pass occupies residues 120-145; sequence VVCDLWLSSDITCCTASIMHLCVIAL. Cys-122 and Cys-199 are disulfide-bonded. Ergotamine-binding residues include Asp-129 and Thr-134. Residues 146–148 carry the DRY motif; important for ligand-induced conformation changes and signaling motif; the sequence is DRY. Topologically, residues 146–165 are cytoplasmic; the sequence is DRYWAITDAVEYSAKRTPKR. The helical transmembrane segment at 166–184 threads the bilayer; that stretch reads AAIMIRLVWVFSICISLPP. The Extracellular portion of the chain corresponds to 185-205; the sequence is FFWRQAKAEEEVSECLVNTDH. Ergotamine is bound at residue Val-201. A helical transmembrane segment spans residues 206 to 229; it reads VLYTVYSTVGAFYLPTLLLIALYG. The Cytoplasmic portion of the chain corresponds to 230-315; that stretch reads RIYVEARSRI…AARERKATKT (86 aa). The segment covering 260 to 272 has biased composition (polar residues); it reads SPGSTTSVTSINS. The interval 260–282 is disordered; the sequence is SPGSTTSVTSINSRAPDVPSESG. Residues 316 to 337 traverse the membrane as a helical segment; the sequence is LGIILGVFIVCWLPFFIISLVM. Over 338 to 347 the chain is Extracellular; the sequence is PICKDACWFH. Residues 348-370 form a helical membrane-spanning segment; sequence QAIFDFFTWLGYVNSLINPIIYT. An NPxxY motif; important for ligand-induced conformation changes and signaling motif is present at residues 365–369; that stretch reads NPIIY. Residues 371–390 lie on the Cytoplasmic side of the membrane; it reads MSNEDFKQAFHKLIRFKCTS. Cys-388 is lipidated: S-palmitoyl cysteine.

This sequence belongs to the G-protein coupled receptor 1 family. As to quaternary structure, homodimer. Heterodimer with HTR1D. In terms of processing, phosphorylated. Desensitization of the receptor may be mediated by its phosphorylation. Post-translationally, palmitoylated.

It is found in the cell membrane. In terms of biological role, G-protein coupled receptor for 5-hydroxytryptamine (serotonin). Also functions as a receptor for ergot alkaloid derivatives, various anxiolytic and antidepressant drugs and other psychoactive substances, such as lysergic acid diethylamide (LSD). Ligand binding causes a conformation change that triggers signaling via guanine nucleotide-binding proteins (G proteins) and modulates the activity of downstream effectors, such as adenylate cyclase. HTR1B is coupled to G(i)/G(o) G alpha proteins and mediates inhibitory neurotransmission by inhibiting adenylate cyclase activity. Arrestin family members inhibit signaling via G proteins and mediate activation of alternative signaling pathways. Regulates the release of 5-hydroxytryptamine, dopamine and acetylcholine in the brain, and thereby affects neural activity, nociceptive processing, pain perception, mood and behavior. Besides, plays a role in vasoconstriction of cerebral arteries. The chain is 5-hydroxytryptamine receptor 1B (HTR1B) from Oryctolagus cuniculus (Rabbit).